We begin with the raw amino-acid sequence, 306 residues long: Ribosomal RNA small subunit methyltransferase A (306 aa).

Residues Asn37, Val39, Gly64, Glu85, Asp115, and Asn134 each coordinate S-adenosyl-L-methionine.

Belongs to the class I-like SAM-binding methyltransferase superfamily. rRNA adenine N(6)-methyltransferase family. RsmA subfamily.

The protein resides in the cytoplasm. The catalysed reaction is adenosine(1518)/adenosine(1519) in 16S rRNA + 4 S-adenosyl-L-methionine = N(6)-dimethyladenosine(1518)/N(6)-dimethyladenosine(1519) in 16S rRNA + 4 S-adenosyl-L-homocysteine + 4 H(+). In terms of biological role, specifically dimethylates two adjacent adenosines (A1518 and A1519) in the loop of a conserved hairpin near the 3'-end of 16S rRNA in the 30S particle. May play a critical role in biogenesis of 30S subunits. This chain is Ribosomal RNA small subunit methyltransferase A, found in Mycobacterium leprae (strain Br4923).